The following is a 933-amino-acid chain: MRVKDTLNLGKTKFKMRGNLPVNEQKREDIWAENKIYEQRQKLNEGKPSFVLHDGPPYANGNIHMGHAMNKISKDIIVRYKSMSGFRSPFVPGWDTHGLPIEQQLTKEGYDRKKMSTADFRKLCHEYALKQVDKQRTDFKRLGISAEWDHPYLTLNPEFEAQEIRTFGRMAELGLIYRGKKPVFWSWSSESAMAEAEVEYHDVTSPSAFYAEKVNDGKGVLDENTYFVVWTTTPWTIPASEGITIDAGFDYSVVQPAGEDRKFVIATDRLNYAAEQFGWEDVQTLQVIRGRELDRIKAIHPFDNDRELVVMLGDFVTLDSGTGLVHTAPGFGEDDFRVGKEYGLDIFVPVDDRGYMTAEAGPDFEGVFYEDANAIALDKLKASNALLKQMDYVHSYPFDWRTKKPIIFRATPQWFASVDKIRDQILEAIEDVEFLPDWGQKRLHNMIRDRGDWVISRQRVWGVPLPIFYAEDGTPILEKETINHVADLFEKNGSDIWFQWEAKDLLPEGYSNEHSPNGEFTKENDIMDVWFDSGSSHQGVLAQRDYLEYPADLVLEGSDQYRGWFNSSLITSVAVSGKAPYKKVISQGFTLDGKGHKMSKSLGNTIVPDEINKKMGAEIIRLWVSSIDSSSDVRVSQENFVKASESYKKIRNTVRYLLANTSDFDPKENGVDYNELRPEDRYMLVQFNELISKIRTSYDNYDFIDIYKTLLNYIITDLSAFYLDFAKDVVYIEPENSLKRRSMQTVFYKILVGLTKLITPILPHTAEEIWEYLREPEEFVQLAEMPEVANYTDGADLLSKWQSIKELRSHVLKALEEARDSKMIGKSMEAKATLYLDESTKQLVDTLGVDLRLILIVSQLEVKALSEAPKDAAIFDDQLAVEITPAQGEVCERCRMTKTDVGSDEHFATLCASCAQIVTENYPEAITEGFEEK.

The 'HIGH' region motif lies at 57 to 67 (PYANGNIHMGH). Glu556 lines the L-isoleucyl-5'-AMP pocket. The 'KMSKS' region signature appears at 597-601 (KMSKS). Lys600 provides a ligand contact to ATP. Residues Cys891, Cys894, Cys911, and Cys914 each coordinate Zn(2+).

Belongs to the class-I aminoacyl-tRNA synthetase family. IleS type 1 subfamily. As to quaternary structure, monomer. It depends on Zn(2+) as a cofactor.

Its subcellular location is the cytoplasm. The catalysed reaction is tRNA(Ile) + L-isoleucine + ATP = L-isoleucyl-tRNA(Ile) + AMP + diphosphate. Catalyzes the attachment of isoleucine to tRNA(Ile). As IleRS can inadvertently accommodate and process structurally similar amino acids such as valine, to avoid such errors it has two additional distinct tRNA(Ile)-dependent editing activities. One activity is designated as 'pretransfer' editing and involves the hydrolysis of activated Val-AMP. The other activity is designated 'posttransfer' editing and involves deacylation of mischarged Val-tRNA(Ile). The polypeptide is Isoleucine--tRNA ligase (Pediococcus pentosaceus (strain ATCC 25745 / CCUG 21536 / LMG 10740 / 183-1w)).